Here is a 146-residue protein sequence, read N- to C-terminus: Large ribosomal subunit protein uL15 (146 aa).

The interval 1–65 (MSDIQLNTLK…GQMPLQRRLP (65 aa)) is disordered. A compositionally biased stretch (gly residues) spans 24 to 34 (RGIGSGLGKTA).

This sequence belongs to the universal ribosomal protein uL15 family. Part of the 50S ribosomal subunit.

Functionally, binds to the 23S rRNA. The chain is Large ribosomal subunit protein uL15 from Bordetella parapertussis (strain 12822 / ATCC BAA-587 / NCTC 13253).